A 494-amino-acid polypeptide reads, in one-letter code: Rhamnulokinase (494 aa).

18-22 contributes to the ATP binding site; the sequence is ASSGR. Substrate-binding positions include Gly87 and 242-244; that span reads HDT. The Proton acceptor role is filled by Asp243. Thr265 contributes to the ATP binding site. Asn302 contacts substrate. Gln310 is an ATP binding site. A disulfide bridge connects residues Cys360 and Cys377. An ATP-binding site is contributed by Gly411.

Belongs to the rhamnulokinase family. Requires Mg(2+) as cofactor.

It catalyses the reaction L-rhamnulose + ATP = L-rhamnulose 1-phosphate + ADP + H(+). It participates in carbohydrate degradation; L-rhamnose degradation; glycerone phosphate from L-rhamnose: step 2/3. In terms of biological role, involved in the catabolism of L-rhamnose (6-deoxy-L-mannose). Catalyzes the transfer of the gamma-phosphate group from ATP to the 1-hydroxyl group of L-rhamnulose to yield L-rhamnulose 1-phosphate. This Enterococcus faecalis (strain ATCC 700802 / V583) protein is Rhamnulokinase.